We begin with the raw amino-acid sequence, 405 residues long: Protein NDRG4 (405 aa).

The tract at residues 352-405 (AGAVPSASMTRLARSRTASLTSASSVDGARPRPCTQSESSDGIGQINHTMEVSC) is disordered. Residues 361–376 (TRLARSRTASLTSASS) are compositionally biased toward low complexity. Residues 385–405 (CTQSESSDGIGQINHTMEVSC) show a composition bias toward polar residues.

The protein belongs to the NDRG family.

Its subcellular location is the cytoplasm. The protein resides in the cytosol. Functionally, contributes to the maintenance of intracerebral BDNF levels within the normal range. May enhance growth factor-induced ERK1 and ERK2 phosphorylation. May attenuate growth factor-promoted ELK1 phosphorylation in a microtubule-dependent manner. In Xenopus tropicalis (Western clawed frog), this protein is Protein NDRG4.